The chain runs to 140 residues: Protein NrdI (140 aa).

The protein belongs to the NrdI family.

In terms of biological role, probably involved in ribonucleotide reductase function. The protein is Protein NrdI of Ruegeria sp. (strain TM1040) (Silicibacter sp.).